Here is a 280-residue protein sequence, read N- to C-terminus: Late embryogenesis abundant protein 76 (280 aa).

Disordered stretches follow at residues 1–156 (MASN…GEAV) and 220–241 (EEED…TDPT). Residues 28 to 39 (MRDKAEEGKDKT) show a composition bias toward basic and acidic residues. 5 LEA 11-mer repeat repeats span residues 31-41 (KAEEGKDKTSQ), 53-63 (TAQAAKDKTSQ), 75-85 (TAQAAKDKTSQ), 97-107 (TAQAAKDKTSQ), and 119-129 (TTQSSKEKTSQ). Over residues 40 to 114 (SQTAQKAQQK…TSQAAQTTQQ (75 aa)) the composition is skewed to low complexity. 2 stretches are compositionally biased toward basic and acidic residues: residues 115–127 (KAHE…KEKT) and 136–145 (EKARETKDKT). Over residues 230-239 (TTTCTTQSTD) the composition is skewed to low complexity.

This sequence belongs to the LEA type 4 family.

Its function is as follows. Lea proteins are late embryonic proteins abundant in higher plant seed embryos. The chain is Late embryogenesis abundant protein 76 from Brassica napus (Rape).